We begin with the raw amino-acid sequence, 344 residues long: L-rhamnose-proton symporter (344 aa).

The next 10 membrane-spanning stretches (helical) occupy residues 4–24 (AITMGIFWHLIGAASAACFYA), 38–58 (WSVGGIVSWIILPWAISALLL), 68–88 (FSLSTLLPVFLFGAMWGIGNI), 101–121 (MGIGIAIGITLIVGTLMTPII), 137–157 (TLLGVLVALIGVGIVTRAGQL), 175–195 (LVLAVMCGIFSAGMSFAMNAA), 214–234 (LPSYVVIMGGGAIINLGFCFI), 259–279 (VLLSALGGLMWYLQFFFYAWG), 290–310 (ISWMLHMSFYVLCGGIVGLVL), and 323–343 (VLSLGCVVIIVAANIVGIGMA).

Belongs to the L-rhamnose transporter (TC 2.A.7.6) family.

Its subcellular location is the cell inner membrane. The catalysed reaction is L-rhamnopyranose(in) + H(+)(in) = L-rhamnopyranose(out) + H(+)(out). Its function is as follows. Uptake of L-rhamnose across the cytoplasmic membrane with the concomitant transport of protons into the cell (symport system). The polypeptide is L-rhamnose-proton symporter (Shigella flexneri).